Here is a 76-residue protein sequence, read N- to C-terminus: uncharacterized protein (76 aa).

Transmembrane regions (helical) follow at residues 9 to 29 and 45 to 65; these read AIGIVVHLIFIAVTWWALQAV and LLMILLTIAIGTAVANFFLDY.

Its subcellular location is the cell membrane. This is an uncharacterized protein from Bacillus subtilis (strain 168).